The sequence spans 374 residues: Carbamoyl phosphate synthase small chain (374 aa).

The CPSase stretch occupies residues 1 to 183 (MVLADGQMIW…QNGYSVVDNQ (183 aa)). Residues Ser41, Gly235, and Gly237 each coordinate L-glutamine. Residues 187–374 (HVVAIDYGLK…FIDLIAKERP (188 aa)) form the Glutamine amidotransferase type-1 domain. The active-site Nucleophile is the Cys264. Residues Leu265, Gln268, Asn306, Gly308, and Phe309 each contribute to the L-glutamine site. Residues His348 and Glu350 contribute to the active site.

This sequence belongs to the CarA family. Composed of two chains; the small (or glutamine) chain promotes the hydrolysis of glutamine to ammonia, which is used by the large (or ammonia) chain to synthesize carbamoyl phosphate. Tetramer of heterodimers (alpha,beta)4.

It carries out the reaction hydrogencarbonate + L-glutamine + 2 ATP + H2O = carbamoyl phosphate + L-glutamate + 2 ADP + phosphate + 2 H(+). The enzyme catalyses L-glutamine + H2O = L-glutamate + NH4(+). It functions in the pathway amino-acid biosynthesis; L-arginine biosynthesis; carbamoyl phosphate from bicarbonate: step 1/1. The protein operates within pyrimidine metabolism; UMP biosynthesis via de novo pathway; (S)-dihydroorotate from bicarbonate: step 1/3. Its function is as follows. Small subunit of the glutamine-dependent carbamoyl phosphate synthetase (CPSase). CPSase catalyzes the formation of carbamoyl phosphate from the ammonia moiety of glutamine, carbonate, and phosphate donated by ATP, constituting the first step of 2 biosynthetic pathways, one leading to arginine and/or urea and the other to pyrimidine nucleotides. The small subunit (glutamine amidotransferase) binds and cleaves glutamine to supply the large subunit with the substrate ammonia. The polypeptide is Carbamoyl phosphate synthase small chain (Zymomonas mobilis subsp. mobilis (strain ATCC 31821 / ZM4 / CP4)).